Consider the following 235-residue polypeptide: Urease accessory protein UreF (235 aa).

It belongs to the UreF family. As to quaternary structure, ureD, UreF and UreG form a complex that acts as a GTP-hydrolysis-dependent molecular chaperone, activating the urease apoprotein by helping to assemble the nickel containing metallocenter of UreC. The UreE protein probably delivers the nickel.

The protein localises to the cytoplasm. In terms of biological role, required for maturation of urease via the functional incorporation of the urease nickel metallocenter. The polypeptide is Urease accessory protein UreF (Ureaplasma parvum serovar 3 (strain ATCC 27815 / 27 / NCTC 11736)).